The chain runs to 84 residues: CDC42 small effector protein 2-A (84 aa).

Residues Cys10 and Cys11 are each lipidated (S-palmitoyl cysteine). Residues 29–42 (IGEPTNFVHTAHVG) enclose the CRIB domain.

This sequence belongs to the CDC42SE/SPEC family.

Its subcellular location is the cytoplasm. The protein localises to the cytoskeleton. It localises to the cell membrane. Probably involved in the organization of the actin cytoskeleton by acting downstream of CDC42, inducing actin filament assembly. The chain is CDC42 small effector protein 2-A (cdc42se2-a) from Xenopus laevis (African clawed frog).